Consider the following 368-residue polypeptide: Probable endopolygalacturonase A (368 aa).

The N-terminal stretch at 1-18 (MRSVKLFGLAALGSLGAA) is a signal peptide. Positions 19–31 (APAPSRVSDLTKR) are excised as a propeptide. Cys35 and Cys50 form a disulfide bridge. PbH1 repeat units follow at residues 140–162 (LEDSTITGLSIKNTPVQAISVQA), 167–192 (LIDITIDNSDGDDNGGHNTDGFDISE), 193–214 (STGVYIRGATVKNQDDCIAINS), 215–235 (GENIEFSGGTCSGGHGLSIGS), 244–265 (VKNVTITDSTVTDSANGVRIKT), 273–295 (VSQVTYSNIKLSGITDYGIVIEQ), and 307–352 (TTGV…DITG). Catalysis depends on Asp207, which acts as the Proton donor. Cys209 and Cys225 form a disulfide bridge. His229 is a catalytic residue. Residue Asn246 is glycosylated (N-linked (GlcNAc...) asparagine). Disulfide bonds link Cys335–Cys340 and Cys359–Cys368.

This sequence belongs to the glycosyl hydrolase 28 family.

It localises to the secreted. The enzyme catalyses (1,4-alpha-D-galacturonosyl)n+m + H2O = (1,4-alpha-D-galacturonosyl)n + (1,4-alpha-D-galacturonosyl)m.. Its function is as follows. Involved in maceration and soft-rotting of plant tissue. Hydrolyzes the 1,4-alpha glycosidic bonds of de-esterified pectate in the smooth region of the plant cell wall. This Aspergillus fumigatus (strain CBS 144.89 / FGSC A1163 / CEA10) (Neosartorya fumigata) protein is Probable endopolygalacturonase A (pgaA).